Consider the following 222-residue polypeptide: Countin-3 (222 aa).

The first 20 residues, 1–20 (MNKILSLFLITILLISKVMS), serve as a signal peptide directing secretion. The 85-residue stretch at 21-105 (SSEECKLCTD…ESVKMCQYND (85 aa)) folds into the Saposin B-type domain. 3 disulfide bridges follow: Cys-25/Cys-101, Cys-28/Cys-95, and Cys-56/Cys-68. N-linked (GlcNAc...) asparagine glycosylation is found at Asn-108, Asn-134, and Asn-218.

Belongs to the countin family.

Its subcellular location is the secreted. Its function is as follows. May control the size of the multicellular structure. The sequence is that of Countin-3 (ctnC) from Dictyostelium discoideum (Social amoeba).